The chain runs to 284 residues: MEAIKKKMTMLKLDKENAIDRAEQAETDKKSAEDKATGLEEELQGLQKRLKATEDELDTSQEKLRTAIENLENAEKKAADAEQEVASLNRRITLVEEELDRAQERLTISLSKLEEAEKAADESERGRKVIENRSLKDEERLEVQEIQLTEAKNIAEDADRKYVEVARKLVMVEAELERGEERAELAESKAIELEEELKIVANNLKSLEASAEKYAAKEGIFEEEIKTLSDKLKDSETRAEFAEKSVVKLEKNIDELEDSLYAEKCKIKAISEDMDVTLQGIGDL.

Positions 1 to 284 form a coiled coil; that stretch reads MEAIKKKMTM…DVTLQGIGDL (284 aa). Positions 18-38 are disordered; it reads AIDRAEQAETDKKSAEDKATG.

The protein belongs to the tropomyosin family. As to quaternary structure, homodimer. In terms of tissue distribution, predominantly expressed in body wall muscle and heart, low in intestine, ovary and larval tail muscle.

In terms of biological role, the function of tropomyosin in smooth muscle and non-muscle cells is not clear. The chain is Tropomyosin, smooth muscle/fibroblast CTM1 (CTM1) from Ciona intestinalis (Transparent sea squirt).